We begin with the raw amino-acid sequence, 299 residues long: dTDP-4-dehydrorhamnose reductase (299 aa).

NADH contacts are provided by residues 10–12, aspartate 30, 39–40, and 63–65; these read GQV, DF, and AHT. 11–12 is a binding site for NADPH; sequence QV. NADPH contacts are provided by residues 39 to 40, 63 to 65, and tyrosine 102; these read DF and AHT. 104–105 contacts dTDP-beta-L-rhamnose; the sequence is TD. Positions 128 and 132 each coordinate NADH. NADPH contacts are provided by tyrosine 128 and lysine 132. The active-site Proton donor/acceptor is the tyrosine 128. Tryptophan 153 contributes to the dTDP-beta-L-rhamnose binding site.

Belongs to the dTDP-4-dehydrorhamnose reductase family. As to quaternary structure, homodimer. It depends on Mg(2+) as a cofactor.

The enzyme catalyses dTDP-beta-L-rhamnose + NADP(+) = dTDP-4-dehydro-beta-L-rhamnose + NADPH + H(+). It participates in carbohydrate biosynthesis; dTDP-L-rhamnose biosynthesis. Its pathway is bacterial outer membrane biogenesis; LPS O-antigen biosynthesis. In terms of biological role, involved in the biosynthesis of the dTDP-L-rhamnose which is an important component of lipopolysaccharide (LPS). Catalyzes the reduction of dTDP-6-deoxy-L-lyxo-4-hexulose to yield dTDP-L-rhamnose. RmlD uses NADH and NADPH nearly equally well. The sequence is that of dTDP-4-dehydrorhamnose reductase from Escherichia coli (strain K12).